The chain runs to 464 residues: MSSGRIIQIIGAVIDVEFERNSVPKIYDALQVDGTETTLEVQQQLGDGVVRTIAMGSTEGLKRGLNVTSTNAPISVPVGPATLGRIMDVLGRPIDEAGPVATEERLPIHRQAPSYAEQAASTDLLETGIKVIDLLCPFAKGGKVGLFGGAGVGKTVNMMELINNIAKAHSGLSVFAGVGERTREGNDFYHEMKDSNVLDKVAMVYGQMNEPPGNRLRVALTGLTMAEYFRDQKDENGKGRDVLLFVDNIYRYTLAGTEVSALLGRMPSAVGYQPTLAEEMGVLQERITSTKSGSITSIQAVYVPADDLTDPSPATTFAHLDATVVLSRDIASSGIYPAIDPLDSTSRQLDPLVVGQEHYEIARSVQNVLQRYKELKDIIAILGMDELAEEDKLVVYRARKIQRFFSQPFHVAEVFTGAPGKLVPLKETIRGFKGLLAGEYDHIPEQAFYMVGGIDEVIAKAEKL.

148–155 (GGAGVGKT) contributes to the ATP binding site.

The protein belongs to the ATPase alpha/beta chains family. In terms of assembly, F-type ATPases have 2 components, CF(1) - the catalytic core - and CF(0) - the membrane proton channel. CF(1) has five subunits: alpha(3), beta(3), gamma(1), delta(1), epsilon(1). CF(0) has three main subunits: a(1), b(2) and c(9-12). The alpha and beta chains form an alternating ring which encloses part of the gamma chain. CF(1) is attached to CF(0) by a central stalk formed by the gamma and epsilon chains, while a peripheral stalk is formed by the delta and b chains.

The protein resides in the cell inner membrane. The enzyme catalyses ATP + H2O + 4 H(+)(in) = ADP + phosphate + 5 H(+)(out). Functionally, produces ATP from ADP in the presence of a proton gradient across the membrane. The catalytic sites are hosted primarily by the beta subunits. The chain is ATP synthase subunit beta from Acinetobacter baylyi (strain ATCC 33305 / BD413 / ADP1).